An 89-amino-acid chain; its full sequence is Small ribosomal subunit protein bS16 (89 aa).

Belongs to the bacterial ribosomal protein bS16 family.

This Nitrosomonas europaea (strain ATCC 19718 / CIP 103999 / KCTC 2705 / NBRC 14298) protein is Small ribosomal subunit protein bS16.